Reading from the N-terminus, the 266-residue chain is Glucose 1-dehydrogenase (266 aa).

15–39 (LVTGASQGIGEATALRFAEEGAQVA) contributes to the NADP(+) binding site. Substrate is bound at residue serine 149. The Proton acceptor role is filled by tyrosine 162.

The protein belongs to the short-chain dehydrogenases/reductases (SDR) family. As to quaternary structure, homotetramer or homooctamer.

It carries out the reaction D-glucose + NADP(+) = D-glucono-1,5-lactone + NADPH + H(+). In terms of biological role, oxidizes both D-glucose and D-mannose, but is 15 times more catalytically efficient with mannose. Strictly dependent on NADP. This is Glucose 1-dehydrogenase from Gluconobacter oxydans (strain 621H) (Gluconobacter suboxydans).